A 252-amino-acid polypeptide reads, in one-letter code: Phosphoglycolate phosphatase (252 aa).

The active-site Nucleophile is Asp13. Residues Asp13, Asp15, and Asp192 each contribute to the Mg(2+) site.

It belongs to the HAD-like hydrolase superfamily. CbbY/CbbZ/Gph/YieH family. In terms of assembly, monomer. Mg(2+) is required as a cofactor. It depends on chloride as a cofactor.

The catalysed reaction is 2-phosphoglycolate + H2O = glycolate + phosphate. The protein operates within organic acid metabolism; glycolate biosynthesis; glycolate from 2-phosphoglycolate: step 1/1. In terms of biological role, specifically catalyzes the dephosphorylation of 2-phosphoglycolate. Is involved in the dissimilation of the intracellular 2-phosphoglycolate formed during the DNA repair of 3'-phosphoglycolate ends, a major class of DNA lesions induced by oxidative stress. This is Phosphoglycolate phosphatase from Shigella sonnei (strain Ss046).